We begin with the raw amino-acid sequence, 690 residues long: Peroxidase (690 aa).

Positions 1-20 (MIRARDLLLLALLGFISSAL) are cleaved as a signal peptide. An intrachain disulfide couples Cys-100 to Cys-112. His-185 serves as the catalytic Proton acceptor. Asn-310 carries N-linked (GlcNAc...) asparagine glycosylation. The cysteines at positions 315 and 324 are disulfide-linked. His-437 contacts heme b. Intrachain disulfides connect Cys-536–Cys-592 and Cys-636–Cys-662.

This sequence belongs to the peroxidase family. XPO subfamily. Requires heme b as cofactor.

It localises to the secreted. The catalysed reaction is 2 a phenolic donor + H2O2 = 2 a phenolic radical donor + 2 H2O. Its function is as follows. Involved in the chorion hardening process, through protein cross-linking mediated by the formation of di- and tri-tyrosine bonds. This is Peroxidase (Pxd) from Drosophila melanogaster (Fruit fly).